The chain runs to 318 residues: NADH-ubiquinone oxidoreductase chain 1 (318 aa).

8 helical membrane-spanning segments follow: residues 3–23 (LINLLAMIIPVLLAVAFLTLL), 69–89 (MLFIIAPTLALTLALTMWTPL), 102–122 (MLFILALSSLAVYTIMWSGWA), 144–164 (VTLAIIILSLLLMNGSFTLLS), 171–191 (YIWLLIPSWPLAMMWFISTLA), 222–242 (LFFLAEYANIIMMNALTIILF), 253–273 (ELYTINFTTKTLLFTAFFLWI), and 294–314 (LPLTLVMCMWHVALPIMLAGI).

The protein belongs to the complex I subunit 1 family. As to quaternary structure, core subunit of respiratory chain NADH dehydrogenase (Complex I) which is composed of 45 different subunits.

It is found in the mitochondrion inner membrane. It carries out the reaction a ubiquinone + NADH + 5 H(+)(in) = a ubiquinol + NAD(+) + 4 H(+)(out). Its function is as follows. Core subunit of the mitochondrial membrane respiratory chain NADH dehydrogenase (Complex I) which catalyzes electron transfer from NADH through the respiratory chain, using ubiquinone as an electron acceptor. Essential for the catalytic activity and assembly of complex I. The polypeptide is NADH-ubiquinone oxidoreductase chain 1 (MT-ND1) (Murina florium (Flores tube-nosed bat)).